The following is a 503-amino-acid chain: Glycosyltransferase family 92 protein ZK381.2 (503 aa).

The helical transmembrane segment at tyrosine 7–isoleucine 27 threads the bilayer. A GT92 domain is found at lysine 156–lysine 441.

The protein belongs to the glycosyltransferase 92 family.

Its subcellular location is the membrane. The polypeptide is Glycosyltransferase family 92 protein ZK381.2 (Caenorhabditis elegans).